A 198-amino-acid chain; its full sequence is Na(+)-translocating NADH-quinone reductase subunit E (198 aa).

6 consecutive transmembrane segments (helical) span residues 11 to 31 (SVFI…FLAV), 35 to 55 (VSTA…AVPA), 77 to 97 (FLNF…LEMI), 110 to 130 (GIFL…SFMV), 140 to 160 (VVYG…LAGL), and 176 to 196 (LGIT…FSGI).

It belongs to the NqrDE/RnfAE family. Composed of six subunits; NqrA, NqrB, NqrC, NqrD, NqrE and NqrF.

Its subcellular location is the cell inner membrane. It carries out the reaction a ubiquinone + n Na(+)(in) + NADH + H(+) = a ubiquinol + n Na(+)(out) + NAD(+). Functionally, NQR complex catalyzes the reduction of ubiquinone-1 to ubiquinol by two successive reactions, coupled with the transport of Na(+) ions from the cytoplasm to the periplasm. NqrA to NqrE are probably involved in the second step, the conversion of ubisemiquinone to ubiquinol. This is Na(+)-translocating NADH-quinone reductase subunit E from Actinobacillus pleuropneumoniae serotype 5b (strain L20).